The sequence spans 255 residues: Geranylgeranylglyceryl phosphate synthase (255 aa).

Mg(2+)-binding residues include Asp-34 and Thr-64. Sn-glycerol 1-phosphate-binding positions include 182–188 (YLEAGSG), 213–214 (GG), and 235–236 (GN).

The protein belongs to the GGGP/HepGP synthase family. Group II subfamily. Mg(2+) is required as a cofactor.

It is found in the cytoplasm. The enzyme catalyses sn-glycerol 1-phosphate + (2E,6E,10E)-geranylgeranyl diphosphate = sn-3-O-(geranylgeranyl)glycerol 1-phosphate + diphosphate. Its pathway is membrane lipid metabolism; glycerophospholipid metabolism. Its function is as follows. Prenyltransferase that catalyzes the transfer of the geranylgeranyl moiety of geranylgeranyl diphosphate (GGPP) to the C3 hydroxyl of sn-glycerol-1-phosphate (G1P). This reaction is the first ether-bond-formation step in the biosynthesis of archaeal membrane lipids. In Saccharolobus solfataricus (strain ATCC 35092 / DSM 1617 / JCM 11322 / P2) (Sulfolobus solfataricus), this protein is Geranylgeranylglyceryl phosphate synthase.